We begin with the raw amino-acid sequence, 199 residues long: Thymidylate kinase (199 aa).

ATP is bound at residue 7 to 14 (GIDGSGKT).

It belongs to the thymidylate kinase family.

The enzyme catalyses dTMP + ATP = dTDP + ADP. Functionally, phosphorylation of dTMP to form dTDP in both de novo and salvage pathways of dTTP synthesis. In Tropheryma whipplei (strain Twist) (Whipple's bacillus), this protein is Thymidylate kinase.